The following is a 289-amino-acid chain: Cell division protein ZipA (289 aa).

Met-1 is a topological domain (periplasmic). A helical transmembrane segment spans residues 2–22; sequence DIGLREWLIVIGLIVIAGILF. Over 23–289 the chain is Cytoplasmic; it reads DGWRRMRGGK…HERRSLMQKR (267 aa). A disordered region spans residues 66–141; it reads REPSFDEQDL…KEREKAPAVA (76 aa). Over residues 81–99 the composition is skewed to basic and acidic residues; sequence REAKERKGGKRQEEPRQGD. A compositionally biased stretch (acidic residues) spans 100-114; the sequence is LDLDEGLALEADPSD.

It belongs to the ZipA family. In terms of assembly, interacts with FtsZ via their C-terminal domains.

Its subcellular location is the cell inner membrane. Functionally, essential cell division protein that stabilizes the FtsZ protofilaments by cross-linking them and that serves as a cytoplasmic membrane anchor for the Z ring. Also required for the recruitment to the septal ring of downstream cell division proteins. The protein is Cell division protein ZipA of Pseudomonas aeruginosa (strain LESB58).